Consider the following 1019-residue polypeptide: Antigenic heat-stable 120 kDa protein (1019 aa).

The segment at 1-33 (MSKNDNQDISEFDPLNREFTEAEKQQQMQQEQE) is disordered. A compositionally biased stretch (basic and acidic residues) spans 14 to 24 (PLNREFTEAEK).

It localises to the cytoplasm. This chain is Antigenic heat-stable 120 kDa protein (sca4), found in Rickettsia typhi (strain ATCC VR-144 / Wilmington).